The following is a 657-amino-acid chain: Histidine ammonia-lyase (657 aa).

A cross-link (5-imidazolinone (Ala-Gly)) is located at residues 253–255 (ASG). Ser-254 bears the 2,3-didehydroalanine (Ser) mark. Thr-396 bears the Phosphothreonine mark. Ser-635 is modified (phosphoserine). Thr-637 carries the post-translational modification Phosphothreonine. Phosphoserine is present on Ser-648.

Belongs to the PAL/histidase family. In terms of processing, contains an active site 4-methylidene-imidazol-5-one (MIO), which is formed autocatalytically by cyclization and dehydration of residues Ala-Ser-Gly.

The catalysed reaction is L-histidine = trans-urocanate + NH4(+). It functions in the pathway amino-acid degradation; L-histidine degradation into L-glutamate; N-formimidoyl-L-glutamate from L-histidine: step 1/3. This Homo sapiens (Human) protein is Histidine ammonia-lyase (HAL).